A 447-amino-acid polypeptide reads, in one-letter code: UDP-N-acetylmuramoyl-L-alanyl-D-glutamate--2,6-diaminopimelate ligase (447 aa).

A UDP-N-acetyl-alpha-D-muramoyl-L-alanyl-D-glutamate-binding site is contributed by Thr21. 74 to 80 (GTNGKTT) serves as a coordination point for ATP. UDP-N-acetyl-alpha-D-muramoyl-L-alanyl-D-glutamate-binding positions include 117–118 (TT), Ser144, Gln150, and Arg152. N6-carboxylysine is present on Lys184. Residues Arg340, 364 to 367 (DNPR), Gly415, and Glu419 each bind meso-2,6-diaminopimelate. The Meso-diaminopimelate recognition motif signature appears at 364 to 367 (DNPR).

The protein belongs to the MurCDEF family. MurE subfamily. Requires Mg(2+) as cofactor. Carboxylation is probably crucial for Mg(2+) binding and, consequently, for the gamma-phosphate positioning of ATP.

It localises to the cytoplasm. It catalyses the reaction UDP-N-acetyl-alpha-D-muramoyl-L-alanyl-D-glutamate + meso-2,6-diaminopimelate + ATP = UDP-N-acetyl-alpha-D-muramoyl-L-alanyl-gamma-D-glutamyl-meso-2,6-diaminopimelate + ADP + phosphate + H(+). Its pathway is cell wall biogenesis; peptidoglycan biosynthesis. In terms of biological role, catalyzes the addition of meso-diaminopimelic acid to the nucleotide precursor UDP-N-acetylmuramoyl-L-alanyl-D-glutamate (UMAG) in the biosynthesis of bacterial cell-wall peptidoglycan. This is UDP-N-acetylmuramoyl-L-alanyl-D-glutamate--2,6-diaminopimelate ligase from Helicobacter pylori (strain J99 / ATCC 700824) (Campylobacter pylori J99).